The following is a 105-amino-acid chain: UPF0060 membrane protein Rmet_4032 (105 aa).

The next 4 helical transmembrane spans lie at 4–24 (VGLY…PYLW), 28–48 (GASP…AWLL), 60–80 (AAYG…VDGV), and 82–102 (PSPW…IIVF).

It belongs to the UPF0060 family.

It is found in the cell inner membrane. The chain is UPF0060 membrane protein Rmet_4032 from Cupriavidus metallidurans (strain ATCC 43123 / DSM 2839 / NBRC 102507 / CH34) (Ralstonia metallidurans).